A 328-amino-acid polypeptide reads, in one-letter code: Cytochrome c biogenesis protein CcsA (328 aa).

8 helical membrane-spanning segments follow: residues 15–35 (FLVL…PSVP), 37–57 (LQAL…ALLG), 68–88 (ISNL…AHLI), 97–117 (LVGV…ALTL), 142–162 (VMML…AFLF), 236–256 (IIGL…VWAN), 271–291 (WALI…TKGW), and 297–317 (AILA…VNLL).

Belongs to the CcmF/CycK/Ccl1/NrfE/CcsA family. In terms of assembly, may interact with ccs1.

The protein localises to the cellular thylakoid membrane. Required during biogenesis of c-type cytochromes (cytochrome c6 and cytochrome f) at the step of heme attachment. The polypeptide is Cytochrome c biogenesis protein CcsA (Gloeothece citriformis (strain PCC 7424) (Cyanothece sp. (strain PCC 7424))).